A 185-amino-acid polypeptide reads, in one-letter code: MVSKVALLLAVLVCSQYMAQGVYVVSKAEWGGRGAKWTVALGNYLSYAIIHHTAGSYCETRAQCNAVLQSVQAYHMDSLGWPDIGYNFLIGGDGNVYEGRGWNNMGAHAAEWNPYSIGISFLGNYNWDTLEPNMISAAQQLLNDAVNRGQLSSGYILYGHRQVSATECPGTHIWNEIRGWSHWSG.

The signal sequence occupies residues 1–21 (MVSKVALLLAVLVCSQYMAQG). An N-acetylmuramoyl-L-alanine amidase domain is found at 46–170 (SYAIIHHTAG…RQVSATECPG (125 aa)). Residue histidine 51 participates in Zn(2+) binding. A disulfide bridge links cysteine 58 with cysteine 64. Residues histidine 160 and cysteine 168 each coordinate Zn(2+).

The protein belongs to the N-acetylmuramoyl-L-alanine amidase 2 family. Zn(2+) is required as a cofactor.

It is found in the secreted. It carries out the reaction Hydrolyzes the link between N-acetylmuramoyl residues and L-amino acid residues in certain cell-wall glycopeptides.. In terms of biological role, N-acetylmuramyl-L-alanine amidase involved in innate immunity by degrading bacterial peptidoglycans (PGN). Plays a scavenger role by digesting biologically active PGN into biologically inactive fragments. Has no direct bacteriolytic activity. The sequence is that of Peptidoglycan-recognition protein SC1a/b (PGRP-SC1a) from Drosophila simulans (Fruit fly).